We begin with the raw amino-acid sequence, 503 residues long: Maturase K (503 aa).

It belongs to the intron maturase 2 family. MatK subfamily.

Its subcellular location is the plastid. The protein resides in the chloroplast. Usually encoded in the trnK tRNA gene intron. Probably assists in splicing its own and other chloroplast group II introns. The sequence is that of Maturase K from Stangeria eriopus (Natal grass cycad).